We begin with the raw amino-acid sequence, 353 residues long: Histidinol-phosphate aminotransferase (353 aa).

Residue lysine 218 is modified to N6-(pyridoxal phosphate)lysine.

It belongs to the class-II pyridoxal-phosphate-dependent aminotransferase family. Histidinol-phosphate aminotransferase subfamily. As to quaternary structure, homodimer. Pyridoxal 5'-phosphate is required as a cofactor.

The enzyme catalyses L-histidinol phosphate + 2-oxoglutarate = 3-(imidazol-4-yl)-2-oxopropyl phosphate + L-glutamate. The protein operates within amino-acid biosynthesis; L-histidine biosynthesis; L-histidine from 5-phospho-alpha-D-ribose 1-diphosphate: step 7/9. This Synechococcus sp. (strain JA-3-3Ab) (Cyanobacteria bacterium Yellowstone A-Prime) protein is Histidinol-phosphate aminotransferase.